The sequence spans 110 residues: Endoribonuclease SymE (110 aa).

Positions 29–74 (SRYPEYTRIPAITLKGQWLEDAGFTTGTQVDVRVMNGCIVLTAQQP) constitute a SpoVT-AbrB domain.

It belongs to the SymE family.

Its subcellular location is the cytoplasm. Its function is as follows. Involved in the degradation and recycling of damaged RNA. It is itself a target for degradation by the ATP-dependent protease Lon. The chain is Endoribonuclease SymE from Salmonella paratyphi C (strain RKS4594).